Here is a 316-residue protein sequence, read N- to C-terminus: Pantothenate kinase (316 aa).

95-102 (GSVAVGKS) provides a ligand contact to ATP.

Belongs to the prokaryotic pantothenate kinase family.

It is found in the cytoplasm. It carries out the reaction (R)-pantothenate + ATP = (R)-4'-phosphopantothenate + ADP + H(+). Its pathway is cofactor biosynthesis; coenzyme A biosynthesis; CoA from (R)-pantothenate: step 1/5. The polypeptide is Pantothenate kinase (Klebsiella pneumoniae subsp. pneumoniae (strain ATCC 700721 / MGH 78578)).